The following is a 464-amino-acid chain: Sulfoacetaldehyde dehydrogenase (acylating) (464 aa).

The active-site Nucleophile is the cysteine 241.

It belongs to the aldehyde dehydrogenase family.

The enzyme catalyses sulfoacetaldehyde + NADP(+) + CoA = sulfoacetyl-CoA + NADPH + H(+). Functionally, involved in the degradation of sulfoacetate. Catalyzes the conversion of sulfoacetyl-CoA and NADPH to sulfoacetaldehyde, CoA and NADP(+). A much lower level of activity (1%) is observed when NADP(+) is replaced with NAD(+). The polypeptide is Sulfoacetaldehyde dehydrogenase (acylating) (Bilophila wadsworthia (strain 3_1_6)).